Reading from the N-terminus, the 359-residue chain is DNA integrity scanning protein DisA (359 aa).

The DAC domain maps to 7–145 (DPTGRAVLRA…DGRRWVLEDS (139 aa)). ATP is bound by residues Gly-74, Leu-92, and 105–109 (TRHRT).

It belongs to the DisA family. As to quaternary structure, homooctamer. Requires Mg(2+) as cofactor.

The enzyme catalyses 2 ATP = 3',3'-c-di-AMP + 2 diphosphate. Participates in a DNA-damage check-point. DisA forms globular foci that rapidly scan along the chromosomes searching for lesions. In terms of biological role, also has diadenylate cyclase activity, catalyzing the condensation of 2 ATP molecules into cyclic di-AMP (c-di-AMP). c-di-AMP likely acts as a signaling molecule that may couple DNA integrity with a cellular process. This is DNA integrity scanning protein DisA from Beutenbergia cavernae (strain ATCC BAA-8 / DSM 12333 / CCUG 43141 / JCM 11478 / NBRC 16432 / NCIMB 13614 / HKI 0122).